The following is a 188-amino-acid chain: Small ribosomal subunit protein uS7 (188 aa).

It belongs to the universal ribosomal protein uS7 family. Part of the 30S ribosomal subunit.

In terms of biological role, one of the primary rRNA binding proteins, it binds directly to 16S rRNA where it nucleates assembly of the head domain of the 30S subunit. Is located at the subunit interface close to the decoding center. In Methanococcus maripaludis (strain DSM 14266 / JCM 13030 / NBRC 101832 / S2 / LL), this protein is Small ribosomal subunit protein uS7.